Reading from the N-terminus, the 457-residue chain is Bifunctional protein GlmU (457 aa).

The pyrophosphorylase stretch occupies residues 1–229; sequence MDLAAVILAA…PVEVTGINDR (229 aa). UDP-N-acetyl-alpha-D-glucosamine contacts are provided by residues 8-11, lysine 22, glutamine 72, and 77-78; these read LAAG and GT. Aspartate 102 is a binding site for Mg(2+). Residues glycine 139, glutamate 154, asparagine 169, and asparagine 227 each coordinate UDP-N-acetyl-alpha-D-glucosamine. Asparagine 227 is a Mg(2+) binding site. Positions 230–250 are linker; the sequence is RQLAEVEKYLRRRVLEDLMQS. Positions 251 to 457 are N-acetyltransferase; the sequence is GVTVLDPAST…WAAKKRDKKV (207 aa). UDP-N-acetyl-alpha-D-glucosamine-binding residues include arginine 332 and lysine 350. Histidine 362 (proton acceptor) is an active-site residue. The UDP-N-acetyl-alpha-D-glucosamine site is built by tyrosine 365 and asparagine 376. Acetyl-CoA contacts are provided by residues 385–386, serine 404, alanine 422, and arginine 439; that span reads NY.

It in the N-terminal section; belongs to the N-acetylglucosamine-1-phosphate uridyltransferase family. This sequence in the C-terminal section; belongs to the transferase hexapeptide repeat family. Homotrimer. Mg(2+) is required as a cofactor.

Its subcellular location is the cytoplasm. It catalyses the reaction alpha-D-glucosamine 1-phosphate + acetyl-CoA = N-acetyl-alpha-D-glucosamine 1-phosphate + CoA + H(+). It carries out the reaction N-acetyl-alpha-D-glucosamine 1-phosphate + UTP + H(+) = UDP-N-acetyl-alpha-D-glucosamine + diphosphate. Its pathway is nucleotide-sugar biosynthesis; UDP-N-acetyl-alpha-D-glucosamine biosynthesis; N-acetyl-alpha-D-glucosamine 1-phosphate from alpha-D-glucosamine 6-phosphate (route II): step 2/2. It participates in nucleotide-sugar biosynthesis; UDP-N-acetyl-alpha-D-glucosamine biosynthesis; UDP-N-acetyl-alpha-D-glucosamine from N-acetyl-alpha-D-glucosamine 1-phosphate: step 1/1. It functions in the pathway bacterial outer membrane biogenesis; LPS lipid A biosynthesis. In terms of biological role, catalyzes the last two sequential reactions in the de novo biosynthetic pathway for UDP-N-acetylglucosamine (UDP-GlcNAc). The C-terminal domain catalyzes the transfer of acetyl group from acetyl coenzyme A to glucosamine-1-phosphate (GlcN-1-P) to produce N-acetylglucosamine-1-phosphate (GlcNAc-1-P), which is converted into UDP-GlcNAc by the transfer of uridine 5-monophosphate (from uridine 5-triphosphate), a reaction catalyzed by the N-terminal domain. The protein is Bifunctional protein GlmU of Pelotomaculum thermopropionicum (strain DSM 13744 / JCM 10971 / SI).